The sequence spans 308 residues: MIKPNRLANKNFLSSLDITTDEVFHILDLSKKFKNKKLNINLHNKVLGLIFDKSSTRTRVSFQVAMSRLGGTTIDLNPTTSQIERGEPIKDTARVLSRYCDVIAIRTFNHADLEEYARWSTKPVINALTDLEHPCQALADFLTIYEEFLDFKDVVLTFIGDGNNVANSLILCGALLGVEVRIACPKGYEPNSMVINKAYEIYKNRNLLKITNDPDTAVLGANVLYTDVWSSMGEENQKAEKDKVFNGFTIDNDLVSKADKEAIILHCLPAYRSKEITDEVFESKKNRIFDQAENRMHVQQALLSCLLY.

Carbamoyl phosphate-binding positions include 55 to 58 (STRT), Gln-82, Arg-106, and 133 to 136 (HPCQ). L-ornithine contacts are provided by residues Asn-164, Asp-227, and 231-232 (SM). Carbamoyl phosphate contacts are provided by residues 267–268 (CL) and Arg-295.

It belongs to the aspartate/ornithine carbamoyltransferase superfamily. OTCase family.

Its subcellular location is the cytoplasm. It carries out the reaction carbamoyl phosphate + L-ornithine = L-citrulline + phosphate + H(+). Its pathway is amino-acid biosynthesis; L-arginine biosynthesis; L-arginine from L-ornithine and carbamoyl phosphate: step 1/3. Its function is as follows. Reversibly catalyzes the transfer of the carbamoyl group from carbamoyl phosphate (CP) to the N(epsilon) atom of ornithine (ORN) to produce L-citrulline. This chain is Ornithine carbamoyltransferase, found in Prochlorococcus marinus subsp. pastoris (strain CCMP1986 / NIES-2087 / MED4).